We begin with the raw amino-acid sequence, 261 residues long: Cytochrome c oxidase subunit 3 (261 aa).

At 1–15 (MTNQLHPFHMTNPSP) the chain is on the mitochondrial matrix side. Residues 16 to 34 (WPLTGATAALLMTSGLIMW) form a helical membrane-spanning segment. Residues 35–40 (FHYNSS) are Mitochondrial intermembrane-facing. A helical transmembrane segment spans residues 41-66 (QLIMLGLLIMLLTLTQWWRDIVREST). The Mitochondrial matrix segment spans residues 67-72 (FQGHHT). A helical membrane pass occupies residues 73–105 (PSVQNNLRYGMILFITSEILFFTGFFWAFYHSS). Residues 106-128 (LSPTAELGNIWPPTGITPLNPFE) lie on the Mitochondrial intermembrane side of the membrane. The chain crosses the membrane as a helical span at residues 129 to 152 (VPLLNTAVLLASGVTITWAHHSLM). Residues 153-155 (EGN) lie on the Mitochondrial matrix side of the membrane. Residues 156 to 183 (RPQTLQALTLTIILGTYFTILQAMEYFE) form a helical membrane-spanning segment. The Mitochondrial intermembrane segment spans residues 184–190 (ASFTIAD). Residues 191 to 223 (SIYGSTFFVATGFHGLHVIIGSTFLIVCLMRQL) form a helical membrane-spanning segment. Topologically, residues 224–232 (KYHFTSHHH) are mitochondrial matrix. The helical transmembrane segment at 233 to 256 (FGFEAAAWYWHFVDVIWLFLYLSI) threads the bilayer. Topologically, residues 257–261 (YWWGS) are mitochondrial intermembrane.

Belongs to the cytochrome c oxidase subunit 3 family. As to quaternary structure, component of the cytochrome c oxidase (complex IV, CIV), a multisubunit enzyme composed of 14 subunits. The complex is composed of a catalytic core of 3 subunits MT-CO1, MT-CO2 and MT-CO3, encoded in the mitochondrial DNA, and 11 supernumerary subunits COX4I, COX5A, COX5B, COX6A, COX6B, COX6C, COX7A, COX7B, COX7C, COX8 and NDUFA4, which are encoded in the nuclear genome. The complex exists as a monomer or a dimer and forms supercomplexes (SCs) in the inner mitochondrial membrane with NADH-ubiquinone oxidoreductase (complex I, CI) and ubiquinol-cytochrome c oxidoreductase (cytochrome b-c1 complex, complex III, CIII), resulting in different assemblies (supercomplex SCI(1)III(2)IV(1) and megacomplex MCI(2)III(2)IV(2)).

The protein localises to the mitochondrion inner membrane. The enzyme catalyses 4 Fe(II)-[cytochrome c] + O2 + 8 H(+)(in) = 4 Fe(III)-[cytochrome c] + 2 H2O + 4 H(+)(out). Its function is as follows. Component of the cytochrome c oxidase, the last enzyme in the mitochondrial electron transport chain which drives oxidative phosphorylation. The respiratory chain contains 3 multisubunit complexes succinate dehydrogenase (complex II, CII), ubiquinol-cytochrome c oxidoreductase (cytochrome b-c1 complex, complex III, CIII) and cytochrome c oxidase (complex IV, CIV), that cooperate to transfer electrons derived from NADH and succinate to molecular oxygen, creating an electrochemical gradient over the inner membrane that drives transmembrane transport and the ATP synthase. Cytochrome c oxidase is the component of the respiratory chain that catalyzes the reduction of oxygen to water. Electrons originating from reduced cytochrome c in the intermembrane space (IMS) are transferred via the dinuclear copper A center (CU(A)) of subunit 2 and heme A of subunit 1 to the active site in subunit 1, a binuclear center (BNC) formed by heme A3 and copper B (CU(B)). The BNC reduces molecular oxygen to 2 water molecules using 4 electrons from cytochrome c in the IMS and 4 protons from the mitochondrial matrix. The polypeptide is Cytochrome c oxidase subunit 3 (MT-CO3) (Pelomedusa subrufa (African side-necked turtle)).